Consider the following 241-residue polypeptide: Small ribosomal subunit protein uS2 (241 aa).

This sequence belongs to the universal ribosomal protein uS2 family.

The sequence is that of Small ribosomal subunit protein uS2 from Buchnera aphidicola subsp. Cinara cedri (strain Cc).